The following is a 2798-amino-acid chain: Kinesin-like protein KIN-12F (2798 aa).

The interval 1-165 (MVRDLAAVRR…RPPMSSGQRG (165 aa)) is disordered. Low complexity-rich tracts occupy residues 8–22 (VRRT…SSAS) and 31–58 (PVDA…QPPQ). The Kinesin motor domain maps to 210-547 (NVQVVIRVRP…LKFAQRARLI (338 aa)). 291-298 (GQTGSGKT) contacts ATP. Acidic residues predominate over residues 600–615 (DVDDGTESMNMDEEND). Positions 600-621 (DVDDGTESMNMDEENDNDAHDR) are disordered. Coiled coils occupy residues 792–835 (ELKR…HSSN), 890–987 (LAEE…HRRQ), 1014–1108 (LKRM…VMKE), 1281–1322 (QRAM…LKNE), and 2130–2333 (ELVD…VRQQ). The disordered stretch occupies residues 2338–2359 (PSSGQATSSLEGGMGDFTDSSR). Coiled-coil stretches lie at residues 2361 to 2427 (SREI…VKSD) and 2545 to 2758 (ESKE…LKLK). The segment at 2772 to 2798 (RSESSSLSSGRSRSPSVCRSPSISSFR) is disordered. Low complexity predominate over residues 2774-2798 (ESSSLSSGRSRSPSVCRSPSISSFR).

It belongs to the TRAFAC class myosin-kinesin ATPase superfamily. Kinesin family. KIN-12 subfamily.

The chain is Kinesin-like protein KIN-12F from Oryza sativa subsp. japonica (Rice).